We begin with the raw amino-acid sequence, 230 residues long: Endonuclease NucS (230 aa).

This sequence belongs to the NucS endonuclease family.

It localises to the cytoplasm. Its function is as follows. Cleaves both 3' and 5' ssDNA extremities of branched DNA structures. In Corynebacterium aurimucosum (strain ATCC 700975 / DSM 44827 / CIP 107346 / CN-1) (Corynebacterium nigricans), this protein is Endonuclease NucS.